The chain runs to 486 residues: Kynurenine 3-monooxygenase (486 aa).

Helical transmembrane passes span Leu-401–Tyr-424 and Ile-437–Arg-459.

This sequence belongs to the aromatic-ring hydroxylase family. KMO subfamily. Requires FAD as cofactor.

It is found in the mitochondrion. It localises to the membrane. The enzyme catalyses L-kynurenine + NADPH + O2 + H(+) = 3-hydroxy-L-kynurenine + NADP(+) + H2O. It functions in the pathway cofactor biosynthesis; NAD(+) biosynthesis; quinolinate from L-kynurenine: step 1/3. Functionally, catalyzes the hydroxylation of L-kynurenine (L-Kyn) to form 3-hydroxy-L-kynurenine (L-3OHKyn). Required for synthesis of quinolinic acid. The sequence is that of Kynurenine 3-monooxygenase (kh) from Anopheles gambiae (African malaria mosquito).